We begin with the raw amino-acid sequence, 462 residues long: Argininosuccinate lyase (462 aa).

Belongs to the lyase 1 family. Argininosuccinate lyase subfamily.

Its subcellular location is the cytoplasm. The enzyme catalyses 2-(N(omega)-L-arginino)succinate = fumarate + L-arginine. It participates in amino-acid biosynthesis; L-arginine biosynthesis; L-arginine from L-ornithine and carbamoyl phosphate: step 3/3. This Caldicellulosiruptor bescii (strain ATCC BAA-1888 / DSM 6725 / KCTC 15123 / Z-1320) (Anaerocellum thermophilum) protein is Argininosuccinate lyase.